The primary structure comprises 645 residues: 1-phosphatidylinositol 4,5-bisphosphate phosphodiesterase zeta-1 (645 aa).

The region spanning 42–77 is the EF-hand domain; that stretch reads CHFAHVKRIFKENDRHNQGRITTEDFRTIYRCIVHR. Positions 162–306 constitute a PI-PLC X-box domain; the sequence is QDMNKPLNDY…LKFKILVKNK (145 aa). Catalysis depends on residues H177 and H222. Residues 385–501 form the PI-PLC Y-box domain; the sequence is LSDLVIYTKA…GYVLKPDFLR (117 aa). Positions 501–625 constitute a C2 domain; it reads RDTTLGFNPN…KGYRRVPLFS (125 aa).

Interacts via its C2 domain with PtdIns(3)P and, to a lesser extent, PtdIns(5)P in vitro. Ca(2+) is required as a cofactor.

It localises to the nucleus. Its subcellular location is the cytoplasm. It is found in the perinuclear region. It catalyses the reaction a 1,2-diacyl-sn-glycero-3-phospho-(1D-myo-inositol-4,5-bisphosphate) + H2O = 1D-myo-inositol 1,4,5-trisphosphate + a 1,2-diacyl-sn-glycerol + H(+). Functionally, the production of the second messenger molecules diacylglycerol (DAG) and inositol 1,4,5-trisphosphate (IP3) is mediated by activated phosphatidylinositol-specific phospholipase C enzymes. In vitro, hydrolyzes PtdIns(4,5)P2 in a Ca(2+)-dependent manner. Triggers intracellular Ca(2+) oscillations in oocytes solely during M phase and is involved in inducing oocyte activation and initiating embryonic development up to the blastocyst stage. Is therefore a strong candidate for the egg-activating soluble sperm factor that is transferred from the sperm into the egg cytoplasm following gamete membrane fusion. May exert an inhibitory effect on phospholipase-C-coupled processes that depend on calcium ions and protein kinase C, including CFTR trafficking and function. This is 1-phosphatidylinositol 4,5-bisphosphate phosphodiesterase zeta-1 from Rattus norvegicus (Rat).